The chain runs to 247 residues: uncharacterized protein (247 aa).

This is an uncharacterized protein from Rickettsia prowazekii (strain Madrid E).